Reading from the N-terminus, the 332-residue chain is L-lactate dehydrogenase C chain (332 aa).

NAD(+) contacts are provided by residues 29-57 (GAVGMACAICILLKDLADELALVDVAVDK) and arginine 99. The substrate site is built by arginine 106, asparagine 138, and arginine 169. Asparagine 138 contributes to the NAD(+) binding site. The Proton acceptor role is filled by histidine 193. Position 248 (threonine 248) interacts with substrate. Serine 301 carries the post-translational modification Phosphoserine.

Belongs to the LDH/MDH superfamily. LDH family. Homotetramer. Interacts with RABL2/RABL2A; binds preferentially to GTP-bound RABL2.

It is found in the cytoplasm. It catalyses the reaction (S)-lactate + NAD(+) = pyruvate + NADH + H(+). The protein operates within fermentation; pyruvate fermentation to lactate; (S)-lactate from pyruvate: step 1/1. In terms of biological role, possible role in sperm motility. The chain is L-lactate dehydrogenase C chain (LDHC) from Sus scrofa (Pig).